Consider the following 417-residue polypeptide: Pelargonidin 3-O-(6-caffeoylglucoside) 5-O-(6-O-malonylglucoside) 4'''-malonyltransferase (417 aa).

Active-site proton acceptor residues include histidine 147 and aspartate 360.

Belongs to the plant acyltransferase family. Monomer. Expressed at higher level in recently opened, fully pigmented flowers.

The enzyme catalyses 4'''-demalonylsalvianin + malonyl-CoA = salvianin + CoA. It functions in the pathway pigment biosynthesis; anthocyanin biosynthesis. With respect to regulation, inhibited by the following metal ions: Cd(2+), Cu(2+), Fe(2+), Hg(2+) and Zn(2+). Activity is strongly inhibited by CoA-SH and partially inhibited by acetyl-CoA, caffeic acid and bisdemalonylsalvianin. Catalyzes the transfer of the malonyl group from malonyl-CoA to the 4'''-hydroxyl group of the 5-glucosyl moiety of anthocyanins. Anthocyanins are ubiquitous colored pigments that are responsible for petal color. This is Pelargonidin 3-O-(6-caffeoylglucoside) 5-O-(6-O-malonylglucoside) 4'''-malonyltransferase from Salvia splendens (Scarlet sage).